A 303-amino-acid polypeptide reads, in one-letter code: Probable cat1 operon transcriptional activator (303 aa).

The HTH lysR-type domain occupies 1-58 (MDLRQFRYFVAVARERNFTRAARQLNIAQPPLSRQIQLLEEEVGVPLLIRNSRPVQLT). A DNA-binding region (H-T-H motif) is located at residues 18–37 (FTRAARQLNIAQPPLSRQIQ).

It belongs to the LysR transcriptional regulatory family.

Probable positive regulator of the cat1 operon which encode enzymes responsible for the degradation of catechol to acetyl-CoA via the beta-ketoadipate pathway. The sequence is that of Probable cat1 operon transcriptional activator from Acinetobacter lwoffii.